The primary structure comprises 294 residues: Pantothenate synthetase 3 (294 aa).

31 to 38 (MGALHEGH) contacts ATP. H38 serves as the catalytic Proton donor. A (R)-pantoate-binding site is contributed by Q62. Q62 is a binding site for beta-alanine. ATP is bound at residue 154–157 (GEKD). A (R)-pantoate-binding site is contributed by Q160. 191–194 (LSSR) contacts ATP.

The protein belongs to the pantothenate synthetase family. In terms of assembly, homodimer.

It localises to the cytoplasm. The enzyme catalyses (R)-pantoate + beta-alanine + ATP = (R)-pantothenate + AMP + diphosphate + H(+). Its pathway is cofactor biosynthesis; (R)-pantothenate biosynthesis; (R)-pantothenate from (R)-pantoate and beta-alanine: step 1/1. In terms of biological role, catalyzes the condensation of pantoate with beta-alanine in an ATP-dependent reaction via a pantoyl-adenylate intermediate. The polypeptide is Pantothenate synthetase 3 (Frankia alni (strain DSM 45986 / CECT 9034 / ACN14a)).